Consider the following 719-residue polypeptide: Protein ENHANCED DISEASE RESISTANCE 2-like (719 aa).

In terms of domain architecture, PH spans 3 to 110 (KVVYEGWMVR…WKEKIECVID (108 aa)). A disordered region spans residues 134-173 (AGRTASSSDHESPFSALEDENDSQRDLLRRTTIGNGPPES). One can recognise an START domain in the interval 180 to 392 (EFDAELSNQS…VSGLREWFSQ (213 aa)). Residues 414–478 (ALGKGGKHHH…ETDAKKTEEP (65 aa)) form a disordered region. Residues 426 to 439 (SLSIDQTNGASRNS) show a composition bias toward polar residues. The span at 442–461 (MDEDSDDDDEFQIPDSEPEP) shows a compositional bias: acidic residues. Basic and acidic residues predominate over residues 462–477 (ETSKQDQETDAKKTEE). Residues 665–685 (GVLGLVIGVITSLVVEMAFLV) traverse the membrane as a helical segment.

It localises to the endoplasmic reticulum membrane. The protein localises to the cell membrane. Its subcellular location is the endosome membrane. Binds to phosphatidylinositol-4-phosphate (PtdIns(4)P). May regulate the salicylic acid- (SA-) mediated resistance to pathogens. This chain is Protein ENHANCED DISEASE RESISTANCE 2-like (EDR2L), found in Arabidopsis thaliana (Mouse-ear cress).